The primary structure comprises 122 residues: Large ribosomal subunit protein uL14c (122 aa).

It belongs to the universal ribosomal protein uL14 family. Part of the 50S ribosomal subunit.

The protein resides in the plastid. It is found in the chloroplast. Its function is as follows. Binds to 23S rRNA. The sequence is that of Large ribosomal subunit protein uL14c from Vitis vinifera (Grape).